The chain runs to 251 residues: Probable transcriptional regulatory protein Cgl1663/cg1872 (251 aa).

Residues 1–22 are disordered; sequence MSGHSKWATTKHKKAANDAKRG.

This sequence belongs to the TACO1 family.

It localises to the cytoplasm. This chain is Probable transcriptional regulatory protein Cgl1663/cg1872, found in Corynebacterium glutamicum (strain ATCC 13032 / DSM 20300 / JCM 1318 / BCRC 11384 / CCUG 27702 / LMG 3730 / NBRC 12168 / NCIMB 10025 / NRRL B-2784 / 534).